A 475-amino-acid chain; its full sequence is Ribulose bisphosphate carboxylase large chain (475 aa).

Residues 1–2 (MS) constitute a propeptide that is removed on maturation. P3 bears the N-acetylproline mark. An N6,N6,N6-trimethyllysine modification is found at K14. Residues N123 and T173 each coordinate substrate. Catalysis depends on K175, which acts as the Proton acceptor. K177 is a substrate binding site. Mg(2+)-binding residues include K201, D203, and E204. An N6-carboxylysine modification is found at K201. Catalysis depends on H294, which acts as the Proton acceptor. Substrate-binding residues include R295, H327, and S379.

It belongs to the RuBisCO large chain family. Type I subfamily. As to quaternary structure, heterohexadecamer of 8 large chains and 8 small chains; disulfide-linked. The disulfide link is formed within the large subunit homodimers. Mg(2+) is required as a cofactor. In terms of processing, the disulfide bond which can form in the large chain dimeric partners within the hexadecamer appears to be associated with oxidative stress and protein turnover.

The protein resides in the plastid. The protein localises to the chloroplast. It carries out the reaction 2 (2R)-3-phosphoglycerate + 2 H(+) = D-ribulose 1,5-bisphosphate + CO2 + H2O. The catalysed reaction is D-ribulose 1,5-bisphosphate + O2 = 2-phosphoglycolate + (2R)-3-phosphoglycerate + 2 H(+). RuBisCO catalyzes two reactions: the carboxylation of D-ribulose 1,5-bisphosphate, the primary event in carbon dioxide fixation, as well as the oxidative fragmentation of the pentose substrate in the photorespiration process. Both reactions occur simultaneously and in competition at the same active site. In Chara vulgaris (Common stonewort), this protein is Ribulose bisphosphate carboxylase large chain.